The sequence spans 294 residues: Peroxidase-like protein 3 (294 aa).

Residue asparagine 129 is glycosylated (N-linked (GlcNAc...) asparagine).

It belongs to the peroxidase family. As to expression, component of the acid-insoluble and acid-soluble organic matrix of calcified layers of the shell (at protein level).

It localises to the secreted. This chain is Peroxidase-like protein 3, found in Lottia gigantea (Giant owl limpet).